A 575-amino-acid chain; its full sequence is uncharacterized protein (575 aa).

6 helical membrane passes run 16-36 (FFLDFFSAIAGGLMELSFPLI), 50-70 (WGLIIATSIGLFAVYALSSAL), 132-152 (PEDLFIAVMTILGAFGVMLFI), 154-174 (WQLALLTFIIMPIVIWLALYF), 243-263 (ISYMLTRFVTLFVLLCGTWFV), and 264-284 (IRGSLSYGEFVAFVLLTNVLF). Residues 16-299 (FFLDFFSAIA…INAIIEMYPR (284 aa)) form the ABC transmembrane type-1 domain. One can recognise an ABC transporter domain in the interval 333-567 (IRYKHVSFGY…GGLYSRLHQA (235 aa)). 366 to 373 (GPSGAGKS) provides a ligand contact to ATP.

This sequence belongs to the ABC transporter superfamily.

The protein resides in the cell membrane. It localises to the membrane raft. This is an uncharacterized protein from Bacillus subtilis (strain 168).